Consider the following 410-residue polypeptide: Sporulation killing factor maturation protein SkfB (410 aa).

Residues 103–314 (SYLPISCTLQ…LREARHKWGD (212 aa)) form the Radical SAM core domain. Residues Cys117, Cys121, Cys124, Cys380, Cys385, and Cys387 each contribute to the [4Fe-4S] cluster site.

Belongs to the radical SAM superfamily. The cofactor is [4Fe-4S] cluster.

Its subcellular location is the cytoplasm. In terms of biological role, catalyzes the formation of the thioether bond required for production of the sporulation killing factor (SKF) from SkfA. Forms the cysteine-methionine thioether bond found in SKF; the acceptor amino acid can be hydrophobic, aromatic or a small hydrophilic amino acid but not a larger hydrophilic amino acid, i.e. Met=Ala, Phe, Leu, Tyr&gt;Asn, Ser&gt;&gt;Gln, Glu, Lys. The relative position of Cys and Met in the substrate cannot be inverted, in vitro the thioether bond cannot be made in the absence of the SkfA propeptide, suggesting this is the first reaction in SKF maturation. In vitro, in the absence of a second substrate, cleaves S-adenosyl-L-methionine into Met and 5'-dA. The protein is Sporulation killing factor maturation protein SkfB of Bacillus subtilis (strain 168).